The primary structure comprises 204 residues: Small ribosomal subunit protein uS4 (204 aa).

One can recognise an S4 RNA-binding domain in the interval 93–156 (SRLSSVLYHS…AKIPVIVEAV (64 aa)).

Belongs to the universal ribosomal protein uS4 family. In terms of assembly, part of the 30S ribosomal subunit. Contacts protein S5. The interaction surface between S4 and S5 is involved in control of translational fidelity.

In terms of biological role, one of the primary rRNA binding proteins, it binds directly to 16S rRNA where it nucleates assembly of the body of the 30S subunit. With S5 and S12 plays an important role in translational accuracy. The sequence is that of Small ribosomal subunit protein uS4 from Wolbachia sp. subsp. Brugia malayi (strain TRS).